A 72-amino-acid polypeptide reads, in one-letter code: Teretoxin Tan11.1 (72 aa).

An N-terminal signal peptide occupies residues 1–21 (MLATKMSVTFCFLLMLTTVML). Residues 22–31 (PTEAKTVAGR) constitute a propeptide that is removed on maturation.

This sequence belongs to the teretoxin H (TH) superfamily. In terms of processing, contains 4 disulfide bonds. As to expression, expressed by the venom duct.

It is found in the secreted. This Terebra anilis (Auger snail) protein is Teretoxin Tan11.1.